A 371-amino-acid chain; its full sequence is MPSNPTRKGRVVVGMSGGVDSSVTAWLLKQQGYEVVGLFMKNWEDDDDSEYCSTRQDLLDAASVADLVGVEFEYVNFAAEYKDRVFAEFLREYSAGRTPNPDVLCNAEIKFKAFLDHAMALGAEHIATGHYARVRTVETPAGPRHQLLKALDDTKDQSYFLHRLNQAQLARTLFPLGELRKTEVRRIAHEIGLHNAAKKDSTGICFIGERPFREFLNRYLPSEPGPILTPEGQRVGTHHGLSFYTLGQRKGLGVGGVKGRQRDDGTAEAWYAARKDLARNVLYVVQGHDHPWLLSAQLQAQDASWIAGEPPAAGAYGAKTRYRQVDAACRLDQAGGERFALAFEQAQWAVTPGQSAVLYDGEVCLGGGIII.

ATP-binding positions include 14 to 21 and M40; that span reads GMSGGVDS. Residues 100 to 102 are interaction with target base in tRNA; sequence NPD. C105 serves as the catalytic Nucleophile. C105 and C205 are joined by a disulfide. Position 129 (G129) interacts with ATP. The interval 155–157 is interaction with tRNA; sequence KDQ. C205 (cysteine persulfide intermediate) is an active-site residue. Positions 321–322 are interaction with tRNA; the sequence is RY.

This sequence belongs to the MnmA/TRMU family.

It is found in the cytoplasm. It carries out the reaction S-sulfanyl-L-cysteinyl-[protein] + uridine(34) in tRNA + AH2 + ATP = 2-thiouridine(34) in tRNA + L-cysteinyl-[protein] + A + AMP + diphosphate + H(+). Catalyzes the 2-thiolation of uridine at the wobble position (U34) of tRNA, leading to the formation of s(2)U34. The sequence is that of tRNA-specific 2-thiouridylase MnmA from Bordetella parapertussis (strain 12822 / ATCC BAA-587 / NCTC 13253).